Consider the following 532-residue polypeptide: E3 ubiquitin-protein ligase rnf8-B (532 aa).

The 55-residue stretch at 30 to 84 folds into the FHA domain; the sequence is VTMGRGLGVTYQLKPTLCPLMISRTHCLFKQNARDEWTVTDNKSLNGVWRNKERL. Positions 127-209 are disordered; sequence SLIRPLPGKT…VETDTVSPTQ (83 aa). A compositionally biased stretch (basic and acidic residues) spans 169–178; the sequence is VSRDGEDSAK. The RING-type zinc finger occupies 377-415; the sequence is CIICSEHFIEAVTLNCAHSFCSYCIKSWRKRKEECPICR.

This sequence belongs to the RNF8 family. As to quaternary structure, homodimer. Forms a E2-E3 ubiquitin ligase complex composed of the rnf8 homodimer and a E2 heterodimer of ube2n and ube2v2.

Its subcellular location is the nucleus. The enzyme catalyses S-ubiquitinyl-[E2 ubiquitin-conjugating enzyme]-L-cysteine + [acceptor protein]-L-lysine = [E2 ubiquitin-conjugating enzyme]-L-cysteine + N(6)-ubiquitinyl-[acceptor protein]-L-lysine.. Its pathway is protein modification; protein ubiquitination. In terms of biological role, E3 ubiquitin-protein ligase that plays a key role in DNA damage signaling via 2 distinct roles: by mediating the 'Lys-63'-linked ubiquitination of histones H2A and H2AX and promoting the recruitment of DNA repair proteins at double-strand breaks (DSBs) sites, and by catalyzing 'Lys-48'-linked ubiquitination to remove target proteins from DNA damage sites. Following DNA DSBs, it is recruited to the sites of damage by ATM-phosphorylated mdc1 and catalyzes the 'Lys-63'-linked ubiquitination of histones H2A and H2AX, thereby promoting the formation of tp53bp1 and brca1 ionizing radiation-induced foci (IRIF). H2A ubiquitination also mediates the ATM-dependent transcriptional silencing at regions flanking DSBs in cis, a mechanism to avoid collision between transcription and repair intermediates. Also catalyzes the formation of 'Lys-48'-linked polyubiquitin chains, leading to degradation of substrate proteins. In addition to its function in damage signaling, also plays a role in higher-order chromatin structure by mediating extensive chromatin decondensation. This is E3 ubiquitin-protein ligase rnf8-B from Xenopus laevis (African clawed frog).